The primary structure comprises 581 residues: Amino-acid acetyltransferase, mitochondrial (581 aa).

An N-acetyltransferase domain is found at 401–558; it reads FTLHNLIEDE…RIVGSEAVNI (158 aa).

It belongs to the acetyltransferase family.

Its subcellular location is the mitochondrion. It catalyses the reaction L-glutamate + acetyl-CoA = N-acetyl-L-glutamate + CoA + H(+). The protein operates within amino-acid biosynthesis; L-arginine biosynthesis; N(2)-acetyl-L-ornithine from L-glutamate: step 1/4. N-acetylglutamate synthase involved in arginine biosynthesis. This Scheffersomyces stipitis (strain ATCC 58785 / CBS 6054 / NBRC 10063 / NRRL Y-11545) (Yeast) protein is Amino-acid acetyltransferase, mitochondrial (ARG2).